The following is a 213-amino-acid chain: Putative cytochrome c-type biogenesis protein HI_1454 (213 aa).

A run of 6 helical transmembrane segments spans residues 15 to 35 (GLASFLSPCIFPIIPIYFGIL), 46 to 66 (FLFILGLSLTFVSLGFSFGFL), 77 to 97 (IIAGVIVIILGIHQLGIFKIG), 118 to 138 (AFVLGLTFSLGWTPCIGPILA), 154 to 174 (ASMMFVYVLGLATPFVLFSFF), and 192 to 212 (FKIGGGILIIVMGILLITNNF).

Belongs to the DsbD family.

It localises to the cell membrane. Functionally, could be involved in cytochrome c synthesis. This is Putative cytochrome c-type biogenesis protein HI_1454 from Haemophilus influenzae (strain ATCC 51907 / DSM 11121 / KW20 / Rd).